The sequence spans 268 residues: Large ribosomal subunit protein mL46 (268 aa).

A mitochondrion-targeting transit peptide spans 1 to 25 (MYLKRNIINMQRSFSRQFHISVRNS).

Belongs to the mitochondrion-specific ribosomal protein mL46 family. Component of the mitochondrial large ribosomal subunit (mt-LSU). Mature yeast 74S mitochondrial ribosomes consist of a small (37S) and a large (54S) subunit. The 37S small subunit contains a 15S ribosomal RNA (15S mt-rRNA) and at least 32 different proteins. The 54S large subunit contains a 21S rRNA (21S mt-rRNA) and at least 45 different proteins.

The protein localises to the mitochondrion. In terms of biological role, component of the mitochondrial ribosome (mitoribosome), a dedicated translation machinery responsible for the synthesis of mitochondrial genome-encoded proteins, including at least some of the essential transmembrane subunits of the mitochondrial respiratory chain. The mitoribosomes are attached to the mitochondrial inner membrane and translation products are cotranslationally integrated into the membrane. The sequence is that of Large ribosomal subunit protein mL46 (mrpl17) from Schizosaccharomyces pombe (strain 972 / ATCC 24843) (Fission yeast).